Here is a 233-residue protein sequence, read N- to C-terminus: Nickel import system ATP-binding protein NikE (233 aa).

Residues 2–228 (IELKHVTFGY…DRHPYTKELV (227 aa)) form the ABC transporter domain. 35–42 (GESGCGKS) provides a ligand contact to ATP.

The protein belongs to the ABC transporter superfamily. As to quaternary structure, the complex is composed of two ATP-binding proteins (NikD and NikE), two transmembrane proteins (NikB and NikC) and a solute-binding protein (NikA).

It localises to the cell membrane. The catalysed reaction is Ni(2+)(out) + ATP + H2O = Ni(2+)(in) + ADP + phosphate + H(+). Part of the ABC transporter complex NikABCDE (Opp2) involved in nickel import. Probably responsible for energy coupling to the transport system. This Staphylococcus aureus (strain MRSA252) protein is Nickel import system ATP-binding protein NikE.